The chain runs to 182 residues: Isopentenyl-diphosphate Delta-isomerase (182 aa).

The Mn(2+) site is built by His-25 and His-32. A Nudix hydrolase domain is found at 30–164 (PLHLAFSCWL…PWAFSPWMVM (135 aa)). Cys-67 is an active-site residue. His-69 is a binding site for Mn(2+). Glu-87 serves as a coordination point for Mg(2+). The Mn(2+) site is built by Glu-114 and Glu-116. The active site involves Glu-116.

The protein belongs to the IPP isomerase type 1 family. As to quaternary structure, homodimer. It depends on Mg(2+) as a cofactor. The cofactor is Mn(2+).

The protein localises to the cytoplasm. The enzyme catalyses isopentenyl diphosphate = dimethylallyl diphosphate. It participates in isoprenoid biosynthesis; dimethylallyl diphosphate biosynthesis; dimethylallyl diphosphate from isopentenyl diphosphate: step 1/1. Catalyzes the 1,3-allylic rearrangement of the homoallylic substrate isopentenyl (IPP) to its highly electrophilic allylic isomer, dimethylallyl diphosphate (DMAPP). This chain is Isopentenyl-diphosphate Delta-isomerase, found in Salmonella arizonae (strain ATCC BAA-731 / CDC346-86 / RSK2980).